A 417-amino-acid polypeptide reads, in one-letter code: NADH-quinone oxidoreductase subunit D (417 aa).

This sequence belongs to the complex I 49 kDa subunit family. As to quaternary structure, NDH-1 is composed of 14 different subunits. Subunits NuoB, C, D, E, F, and G constitute the peripheral sector of the complex.

The protein localises to the cell inner membrane. It catalyses the reaction a quinone + NADH + 5 H(+)(in) = a quinol + NAD(+) + 4 H(+)(out). In terms of biological role, NDH-1 shuttles electrons from NADH, via FMN and iron-sulfur (Fe-S) centers, to quinones in the respiratory chain. The immediate electron acceptor for the enzyme in this species is believed to be ubiquinone. Couples the redox reaction to proton translocation (for every two electrons transferred, four hydrogen ions are translocated across the cytoplasmic membrane), and thus conserves the redox energy in a proton gradient. This Chromobacterium violaceum (strain ATCC 12472 / DSM 30191 / JCM 1249 / CCUG 213 / NBRC 12614 / NCIMB 9131 / NCTC 9757 / MK) protein is NADH-quinone oxidoreductase subunit D.